A 219-amino-acid polypeptide reads, in one-letter code: Proteasome subunit beta type-9 (219 aa).

The propeptide at 1-20 (MLRAGAPTAGSFRTEEVHTG) is removed in mature form. The active-site Nucleophile is the T21. N6-acetyllysine occurs at positions 53 and 109.

It belongs to the peptidase T1B family. In terms of assembly, the 26S proteasome consists of a 20S proteasome core and two 19S regulatory subunits. The 20S proteasome core is composed of 28 subunits that are arranged in four stacked rings, resulting in a barrel-shaped structure. The two end rings are each formed by seven alpha subunits, and the two central rings are each formed by seven beta subunits. The catalytic chamber with the active sites is on the inside of the barrel. Component of the immunoproteasome, where it displaces the equivalent housekeeping subunit PSMB6. Component of the spermatoproteasome, a form of the proteasome specifically found in testis. Post-translationally, autocleaved. The resulting N-terminal Thr residue of the mature subunit is responsible for the nucleophile proteolytic activity.

It localises to the cytoplasm. The protein localises to the nucleus. It catalyses the reaction Cleavage of peptide bonds with very broad specificity.. In terms of biological role, the proteasome is a multicatalytic proteinase complex which is characterized by its ability to cleave peptides with Arg, Phe, Tyr, Leu, and Glu adjacent to the leaving group at neutral or slightly basic pH. The proteasome has an ATP-dependent proteolytic activity. This subunit is involved in antigen processing to generate class I binding peptides. The protein is Proteasome subunit beta type-9 (Psmb9) of Mus terricolor (Earth-colored mouse).